The sequence spans 225 residues: Adenosylcobinamide-GDP ribazoletransferase (225 aa).

The next 5 membrane-spanning stretches (helical) occupy residues 34–54 (FVGIFIGSVISIPAVLGFWFL), 93–113 (NLGTGGAVFLCVYFLILFYSF), 116–136 (VSAFYIIFSQVLAKFSMLLLL), 165–185 (PLLLVVLKPLAVFPLLFAITI), and 204–224 (VVGASNCLVFAGSLLVCYFLA).

The protein belongs to the CobS family. The cofactor is Mg(2+).

Its subcellular location is the cell membrane. The catalysed reaction is alpha-ribazole + adenosylcob(III)inamide-GDP = adenosylcob(III)alamin + GMP + H(+). It carries out the reaction alpha-ribazole 5'-phosphate + adenosylcob(III)inamide-GDP = adenosylcob(III)alamin 5'-phosphate + GMP + H(+). It functions in the pathway cofactor biosynthesis; adenosylcobalamin biosynthesis; adenosylcobalamin from cob(II)yrinate a,c-diamide: step 7/7. Functionally, joins adenosylcobinamide-GDP and alpha-ribazole to generate adenosylcobalamin (Ado-cobalamin). Also synthesizes adenosylcobalamin 5'-phosphate from adenosylcobinamide-GDP and alpha-ribazole 5'-phosphate. In Archaeoglobus fulgidus (strain ATCC 49558 / DSM 4304 / JCM 9628 / NBRC 100126 / VC-16), this protein is Adenosylcobinamide-GDP ribazoletransferase (cobS1).